The following is a 1059-amino-acid chain: Tyrosine-protein kinase-like otk (1059 aa).

The N-terminal stretch at 1–23 (MDMLMMWSICLFVCIFMAPFSCG) is a signal peptide. The Extracellular segment spans residues 24 to 597 (SGSSSRFIQV…GDGGFLATRA (574 aa)). Ig-like C2-type domains lie at 28 to 112 (SRFI…REAS), 113 to 202 (PTAK…RVMS), 258 to 377 (PEGL…LAIN), 380 to 475 (PGIL…VSIN), and 480 to 570 (PKFS…AVLT). N-linked (GlcNAc...) asparagine glycosylation occurs at asparagine 42. 4 cysteine pairs are disulfide-bonded: cysteine 49/cysteine 99, cysteine 141/cysteine 191, cysteine 283/cysteine 366, and cysteine 411/cysteine 459. N-linked (GlcNAc...) asparagine glycosylation is found at asparagine 348, asparagine 429, asparagine 441, asparagine 456, asparagine 469, asparagine 524, and asparagine 536. Cysteine 502 and cysteine 554 are joined by a disulfide. Residues 598 to 618 (VLITMTVALAYIVLVVGLMLW) form a helical membrane-spanning segment. The Cytoplasmic segment spans residues 619–1059 (CRYRRQARKA…ALSKAMQNSE (441 aa)). The segment at 639–695 (GGEQAGGEGSTSGNPKASEQEPCLGKQQRNGRNGKSKSNGDPQKSDDTACSQQSRAS) is disordered. The segment covering 665 to 693 (QQRNGRNGKSKSNGDPQKSDDTACSQQSR) has biased composition (polar residues). At serine 698 the chain carries Phosphoserine. Residues 712 to 1055 (LSELIQIGRG…QLGAALSKAM (344 aa)) form the Protein kinase; inactive domain. The disordered stretch occupies residues 739 to 781 (AQANDKDSDNDKQHSNSENGSGGSSGSTTLSTLNEKRRSKTSM). The segment covering 742 to 753 (NDKDSDNDKQHS) has biased composition (basic and acidic residues).

The protein belongs to the protein kinase superfamily. Tyr protein kinase family. Insulin receptor subfamily. As to quaternary structure, interacts with plexA; component of a receptor complex that mediates the repulsive signaling in response to Semaphorin ligands.

The protein resides in the cell membrane. Functionally, acts as a calcium-dependent, homophilic cell adhesion molecule that regulates neural recognition during the development of the nervous system. Component of the repulsive Plexin signaling response to regulate motor axon guidance at the embryonic stage. Also component of a receptor complex that is required in the adult visual system to innervate the lamina layer; specific targeting of R1-R6 axons. The chain is Tyrosine-protein kinase-like otk from Drosophila willistoni (Fruit fly).